The sequence spans 495 residues: Glucose-6-phosphate 1-dehydrogenase (495 aa).

Residue Lys51 forms an Isoglutamyl lysine isopeptide (Lys-Gln) (interchain with Q-Cter in protein Pup) linkage. NADP(+) is bound by residues 94 to 95 (DL) and Lys154. Substrate-binding residues include His184, Lys188, Glu222, and Asp241. The active-site Proton acceptor is the His246. A substrate-binding site is contributed by Lys345.

This sequence belongs to the glucose-6-phosphate dehydrogenase family.

The enzyme catalyses D-glucose 6-phosphate + NADP(+) = 6-phospho-D-glucono-1,5-lactone + NADPH + H(+). It functions in the pathway carbohydrate degradation; pentose phosphate pathway; D-ribulose 5-phosphate from D-glucose 6-phosphate (oxidative stage): step 1/3. Catalyzes the oxidation of glucose 6-phosphate to 6-phosphogluconolactone. In Mycolicibacterium smegmatis (strain ATCC 700084 / mc(2)155) (Mycobacterium smegmatis), this protein is Glucose-6-phosphate 1-dehydrogenase.